The following is a 386-amino-acid chain: Phosphoglycerate kinase (386 aa).

Substrate-binding positions include 21-23, Arg36, 59-62, Arg113, and Arg146; these read DLN and HLGR. ATP-binding positions include Lys197, Glu314, and 340-343; that span reads GGDT.

Belongs to the phosphoglycerate kinase family. In terms of assembly, monomer.

It localises to the cytoplasm. It catalyses the reaction (2R)-3-phosphoglycerate + ATP = (2R)-3-phospho-glyceroyl phosphate + ADP. It functions in the pathway carbohydrate degradation; glycolysis; pyruvate from D-glyceraldehyde 3-phosphate: step 2/5. This Vibrio campbellii (strain ATCC BAA-1116) protein is Phosphoglycerate kinase.